Reading from the N-terminus, the 280-residue chain is uncharacterized protein (280 aa).

Transmembrane regions (helical) follow at residues 10-29, 164-186, and 209-228; these read IQQN…LLFN, FVFV…FAFI, and IFGL…YFLL.

It is found in the cell membrane. This is an uncharacterized protein from Bacillus subtilis (strain 168).